We begin with the raw amino-acid sequence, 446 residues long: Probable D-serine dehydratase (446 aa).

K116 bears the N6-(pyridoxal phosphate)lysine mark.

The protein belongs to the serine/threonine dehydratase family. DsdA subfamily. Requires pyridoxal 5'-phosphate as cofactor.

The enzyme catalyses D-serine = pyruvate + NH4(+). This Bacillus cereus (strain 03BB102) protein is Probable D-serine dehydratase.